Consider the following 274-residue polypeptide: Large ribosomal subunit protein uL2 (274 aa).

2 disordered regions span residues 21–59 (KVGL…GGHK) and 223–274 (VAMN…QLKG). A compositionally biased stretch (low complexity) spans 32–42 (SLTSGKKSSGG). A compositionally biased stretch (basic residues) spans 45–59 (NHGRITTRHRGGGHK). Over residues 263–274 (KSSDKYIKQLKG) the composition is skewed to basic and acidic residues.

Belongs to the universal ribosomal protein uL2 family. Part of the 50S ribosomal subunit. Forms a bridge to the 30S subunit in the 70S ribosome.

Its function is as follows. One of the primary rRNA binding proteins. Required for association of the 30S and 50S subunits to form the 70S ribosome, for tRNA binding and peptide bond formation. It has been suggested to have peptidyltransferase activity; this is somewhat controversial. Makes several contacts with the 16S rRNA in the 70S ribosome. This chain is Large ribosomal subunit protein uL2, found in Wolbachia sp. subsp. Drosophila simulans (strain wRi).